The following is a 247-amino-acid chain: Disease resistance protein BAK6 (247 aa).

The first 24 residues, 1–24 (MAAVQFAAAGVLTGLLALATLASC), serve as a signal peptide directing secretion. N66, N104, and N113 each carry an N-linked (GlcNAc...) asparagine glycan. 6 LRR repeats span residues 90–114 (LESL…LGNL), 116–138 (DLIS…LGSI), 139–161 (STLR…SFGN), 162–186 (LTSL…LGNI), 188–210 (SLQF…VLSL), and 213–237 (VGNL…GLRV). 2 N-linked (GlcNAc...) asparagine glycosylation sites follow: N150 and N161. A glycan (N-linked (GlcNAc...) asparagine) is linked at N215.

In terms of assembly, interacts with WAK17 isoform 1; the interaction is direct. As to quaternary structure, (Microbial infection) Interacts with G.zeae CFEM1; the interaction is direct. Interacts with G.zeae CFEMN1; the interaction is direct. Interacts with G.zeae CFEM5; the interaction is direct.

Contributes to activation of the hypersensitive response, a form of programmed cell death, upon fungal infection. May sense the presence of fungal material and relay the signal to WAK17 isoform 1. The polypeptide is Disease resistance protein BAK6 (Zea mays (Maize)).